Here is a 285-residue protein sequence, read N- to C-terminus: Shikimate dehydrogenase (NADP(+)) (285 aa).

Residues 22–24 and T71 each bind shikimate; that span reads SRS. K75 (proton acceptor) is an active-site residue. Shikimate is bound by residues N96 and D111. Residues 136–140, 160–165, and I225 each bind NADP(+); these read GAGGA and NRTVGR. Residue Y227 participates in shikimate binding. G248 contributes to the NADP(+) binding site.

Belongs to the shikimate dehydrogenase family. In terms of assembly, homodimer.

The catalysed reaction is shikimate + NADP(+) = 3-dehydroshikimate + NADPH + H(+). It functions in the pathway metabolic intermediate biosynthesis; chorismate biosynthesis; chorismate from D-erythrose 4-phosphate and phosphoenolpyruvate: step 4/7. Functionally, involved in the biosynthesis of the chorismate, which leads to the biosynthesis of aromatic amino acids. Catalyzes the reversible NADPH linked reduction of 3-dehydroshikimate (DHSA) to yield shikimate (SA). The chain is Shikimate dehydrogenase (NADP(+)) from Rhizobium etli (strain CIAT 652).